We begin with the raw amino-acid sequence, 380 residues long: Chaperone protein DnaJ (380 aa).

Residues 5 to 70 (DYYEILGVTK…QKRAAYDRFG (66 aa)) form the J domain. The CR-type zinc finger occupies 137-215 (GKAETIKIPT…CQGAGRVNRE (79 aa)). The Zn(2+) site is built by Cys-150, Cys-153, Cys-167, Cys-170, Cys-189, Cys-192, Cys-203, and Cys-206. CXXCXGXG motif repeat units follow at residues 150 to 157 (CEVCDGSG), 167 to 174 (CPTCAGYG), 189 to 196 (CPNCHGRG), and 203 to 210 (CTACQGAG).

Belongs to the DnaJ family. Homodimer. The cofactor is Zn(2+).

It is found in the cytoplasm. Participates actively in the response to hyperosmotic and heat shock by preventing the aggregation of stress-denatured proteins and by disaggregating proteins, also in an autonomous, DnaK-independent fashion. Unfolded proteins bind initially to DnaJ; upon interaction with the DnaJ-bound protein, DnaK hydrolyzes its bound ATP, resulting in the formation of a stable complex. GrpE releases ADP from DnaK; ATP binding to DnaK triggers the release of the substrate protein, thus completing the reaction cycle. Several rounds of ATP-dependent interactions between DnaJ, DnaK and GrpE are required for fully efficient folding. Also involved, together with DnaK and GrpE, in the DNA replication of plasmids through activation of initiation proteins. The sequence is that of Chaperone protein DnaJ from Methylobacterium radiotolerans (strain ATCC 27329 / DSM 1819 / JCM 2831 / NBRC 15690 / NCIMB 10815 / 0-1).